The primary structure comprises 463 residues: tRNA-2-methylthio-N(6)-dimethylallyladenosine synthase (463 aa).

Positions 5 to 125 (RKLHIKSYGC…LPQLLAKAEQ (121 aa)) constitute an MTTase N-terminal domain. Cys-14, Cys-50, Cys-88, Cys-166, Cys-170, and Cys-173 together coordinate [4Fe-4S] cluster. The Radical SAM core domain maps to 152–384 (RARGISAFVT…QQLIDQQQSA (233 aa)). In terms of domain architecture, TRAM spans 387-449 (KAAIGRTVEV…RYSLLGELAS (63 aa)).

It belongs to the methylthiotransferase family. MiaB subfamily. In terms of assembly, monomer. [4Fe-4S] cluster serves as cofactor.

Its subcellular location is the cytoplasm. The enzyme catalyses N(6)-dimethylallyladenosine(37) in tRNA + (sulfur carrier)-SH + AH2 + 2 S-adenosyl-L-methionine = 2-methylsulfanyl-N(6)-dimethylallyladenosine(37) in tRNA + (sulfur carrier)-H + 5'-deoxyadenosine + L-methionine + A + S-adenosyl-L-homocysteine + 2 H(+). Its function is as follows. Catalyzes the methylthiolation of N6-(dimethylallyl)adenosine (i(6)A), leading to the formation of 2-methylthio-N6-(dimethylallyl)adenosine (ms(2)i(6)A) at position 37 in tRNAs that read codons beginning with uridine. The polypeptide is tRNA-2-methylthio-N(6)-dimethylallyladenosine synthase (Rhodopseudomonas palustris (strain TIE-1)).